The chain runs to 316 residues: Protoheme IX farnesyltransferase (316 aa).

9 consecutive transmembrane segments (helical) span residues 32–52, 53–73, 93–113, 116–136, 152–172, 180–200, 226–246, 248–268, and 289–309; these read VMSL…GQIN, PVLG…SGAL, IPAG…LSCF, AILG…TIFF, NIVI…ACVT, TVLF…LALF, IVAY…LGFA, FAYG…SIAV, and IFYL…AMLV.

Belongs to the UbiA prenyltransferase family. Protoheme IX farnesyltransferase subfamily.

It is found in the cell inner membrane. The enzyme catalyses heme b + (2E,6E)-farnesyl diphosphate + H2O = Fe(II)-heme o + diphosphate. It participates in porphyrin-containing compound metabolism; heme O biosynthesis; heme O from protoheme: step 1/1. Converts heme B (protoheme IX) to heme O by substitution of the vinyl group on carbon 2 of heme B porphyrin ring with a hydroxyethyl farnesyl side group. This is Protoheme IX farnesyltransferase from Rhizobium etli (strain CIAT 652).